Here is a 2117-residue protein sequence, read N- to C-terminus: Tudor domain-containing 6 (2117 aa).

5 consecutive Tudor domains span residues 62–118 (DGNP…FFYL), 291–350 (AENL…FFRM), 527–584 (KPVV…FQQL), 757–816 (EPLL…FLKM), and 974–1030 (PQTF…AGDI). Residues 1125–1216 (ASACKKESST…SSKPEVVKPK (92 aa)) form a disordered region. Residues 1127-1152 (ACKKESSTGPKRDAIDQVPKSRESHA) show a composition bias toward basic and acidic residues. Polar residues-rich tracts occupy residues 1153 to 1174 (IQRS…STNG) and 1181 to 1209 (DSGT…TSSK). Tudor domains lie at 1282–1340 (DIHE…FASF) and 1485–1543 (CMPV…LSDV).

In terms of assembly, interacts (via Tudor domain) with buc (when dimethylated on arginine residues); and may be responsible for recruitment of different protein complexes to germ plasm.

The protein resides in the cytoplasm. Its function is as follows. Tudor domain-containing protein involved in germ cell development, more specifically the formation of chromatoid body (during spermiogenesis), Balbiani body (during oogenesis), germ plasm (upon fertilization), and for proper miRNA expression and spliceosome maturation. Required for Balbiani body and germ plasm formation and mobility through interaction with dimethylated arginines in the prion-like protein Bucky ball (buc). Coordinates transcript deposition into future primordial germ cells. Interacts with known germ plasm mRNAs such as vasa, dazl, nanos3 and hook2. This Danio rerio (Zebrafish) protein is Tudor domain-containing 6.